We begin with the raw amino-acid sequence, 207 residues long: Large ribosomal subunit protein uL3c (207 aa).

Residues 129–148 (TRGPMTHGSKNHRAPGSIGM) are disordered.

This sequence belongs to the universal ribosomal protein uL3 family. As to quaternary structure, part of the 50S ribosomal subunit.

It is found in the plastid. Its subcellular location is the chloroplast. In terms of biological role, one of the primary rRNA binding proteins, it binds directly near the 3'-end of the 23S rRNA, where it nucleates assembly of the 50S subunit. The sequence is that of Large ribosomal subunit protein uL3c (rpl3) from Phaeodactylum tricornutum (strain CCAP 1055/1).